The chain runs to 134 residues: Large ribosomal subunit protein bL20 (134 aa).

It belongs to the bacterial ribosomal protein bL20 family.

Its function is as follows. Binds directly to 23S ribosomal RNA and is necessary for the in vitro assembly process of the 50S ribosomal subunit. It is not involved in the protein synthesizing functions of that subunit. This chain is Large ribosomal subunit protein bL20, found in Brucella abortus (strain S19).